Here is a 147-residue protein sequence, read N- to C-terminus: Hemoglobin subunit beta-2 (147 aa).

The 145-residue stretch at 3 to 147 folds into the Globin domain; it reads EWTDSERAII…VVSALGRQYH (145 aa). Heme b-binding residues include H64 and H93.

This sequence belongs to the globin family. Hb 3 is a heterotetramer of two alpha-2 and two beta-2 chains. As to expression, red blood cells.

Functionally, involved in oxygen transport from gills to the various peripheral tissues. In Boreogadus saida (Polar cod), this protein is Hemoglobin subunit beta-2 (hbb2).